Consider the following 202-residue polypeptide: dITP/XTP pyrophosphatase (202 aa).

Residue 7–12 (SNNPGK) coordinates substrate. Mg(2+)-binding residues include E39 and D68. D68 acts as the Proton acceptor in catalysis. Residues A69, 157–160 (FGFD), K180, and 185–186 (HR) contribute to the substrate site.

It belongs to the HAM1 NTPase family. In terms of assembly, homodimer. Mg(2+) serves as cofactor.

The catalysed reaction is XTP + H2O = XMP + diphosphate + H(+). It carries out the reaction dITP + H2O = dIMP + diphosphate + H(+). It catalyses the reaction ITP + H2O = IMP + diphosphate + H(+). Functionally, pyrophosphatase that catalyzes the hydrolysis of nucleoside triphosphates to their monophosphate derivatives, with a high preference for the non-canonical purine nucleotides XTP (xanthosine triphosphate), dITP (deoxyinosine triphosphate) and ITP. Seems to function as a house-cleaning enzyme that removes non-canonical purine nucleotides from the nucleotide pool, thus preventing their incorporation into DNA/RNA and avoiding chromosomal lesions. The protein is dITP/XTP pyrophosphatase of Polaromonas naphthalenivorans (strain CJ2).